We begin with the raw amino-acid sequence, 247 residues long: ATP synthase subunit a, chloroplastic (247 aa).

The next 5 helical transmembrane spans lie at 38–58 (QVLI…FIAV), 95–115 (VPFI…GALL), 134–154 (INTT…AGLS), 199–219 (LVVV…VMFL), and 220–240 (GLFT…AYIG).

Belongs to the ATPase A chain family. F-type ATPases have 2 components, CF(1) - the catalytic core - and CF(0) - the membrane proton channel. CF(1) has five subunits: alpha(3), beta(3), gamma(1), delta(1), epsilon(1). CF(0) has four main subunits: a, b, b' and c.

It localises to the plastid. It is found in the chloroplast thylakoid membrane. Functionally, key component of the proton channel; it plays a direct role in the translocation of protons across the membrane. This Citrus sinensis (Sweet orange) protein is ATP synthase subunit a, chloroplastic.